The primary structure comprises 163 residues: UPF0416 protein RBE_0909 (163 aa).

This sequence belongs to the UPF0416 family.

This chain is UPF0416 protein RBE_0909, found in Rickettsia bellii (strain RML369-C).